The following is an 85-amino-acid chain: Small ribosomal subunit protein bS16 (85 aa).

This sequence belongs to the bacterial ribosomal protein bS16 family.

In Acinetobacter baylyi (strain ATCC 33305 / BD413 / ADP1), this protein is Small ribosomal subunit protein bS16.